Consider the following 291-residue polypeptide: Shikimate dehydrogenase (NADP(+)) (291 aa).

Shikimate is bound by residues 26-28 (SLS) and S73. Catalysis depends on K77, which acts as the Proton acceptor. The shikimate site is built by N98 and D113. NADP(+)-binding positions include 137 to 141 (GAGGA) and V238. Residue Y240 participates in shikimate binding. G261 serves as a coordination point for NADP(+).

This sequence belongs to the shikimate dehydrogenase family. As to quaternary structure, homodimer.

It carries out the reaction shikimate + NADP(+) = 3-dehydroshikimate + NADPH + H(+). It participates in metabolic intermediate biosynthesis; chorismate biosynthesis; chorismate from D-erythrose 4-phosphate and phosphoenolpyruvate: step 4/7. Functionally, involved in the biosynthesis of the chorismate, which leads to the biosynthesis of aromatic amino acids. Catalyzes the reversible NADPH linked reduction of 3-dehydroshikimate (DHSA) to yield shikimate (SA). The sequence is that of Shikimate dehydrogenase (NADP(+)) from Listeria innocua serovar 6a (strain ATCC BAA-680 / CLIP 11262).